We begin with the raw amino-acid sequence, 413 residues long: CinA-like protein (413 aa).

The protein belongs to the CinA family.

In Desulfotalea psychrophila (strain LSv54 / DSM 12343), this protein is CinA-like protein.